Reading from the N-terminus, the 423-residue chain is SH2 domain-containing protein 5 (423 aa).

The PID domain occupies 28 to 146; it reads AQYVGLLPCG…LLCRSFQLAY (119 aa). In terms of domain architecture, SH2 spans 296–392; it reads WAFAGISRPC…LDMGRLNPTY (97 aa). Residues 394–423 form a disordered region; the sequence is EQDCGPLGRPPRTLRPLSHAKSEAELQGLG. Residues 398–410 show a composition bias toward low complexity; the sequence is GPLGRPPRTLRPL.

Interacts with BCR.

It is found in the postsynaptic density. Functionally, may be involved in synaptic plasticity regulation through the control of Rac-GTP levels. This is SH2 domain-containing protein 5 from Pongo abelii (Sumatran orangutan).